The following is a 931-amino-acid chain: MSKSFAYRHIWCFWRFNTPLLWFPQPLKYWPAFQQSHTFNSMSVFKNDNAIANQTTVNESDVKRNVEKINDIYECSNNTKSPCFPNSDSRIPLVNWKTSTNPTLQVRAYMLDLLLPFFTLDLLPFLNKVCECCNHMLLDNPKIKQDLPFAFCYLFSSYFSYKSSRQYTCSSEEISKVFRHLNRLGGSEYVLHLFAQIPKALCKELTDVRTLNHPLRSIFTFCFKNISNPPNLLKLLTKLYPRSDRANEVLYTQYLGFLTKRGDYQIAIYMFDEMYRTHHWSSFTACRLMIESLVRQNKFEEAISLYKKIIAKRPKIARDKKILNLLLYISTVSNRSPDAFKLALQSISNANQIPSFDVFSRLMSALVKYNMTEMILPLVKQYDHKFRNLYSPNIFLSIVQALVFCGDMVNIQRWYNMSRVNSELSRIKHLLNCFLNSSTVSLDVSMVLELLRDLKKKKIKVDERTLVICITIFSRRKDLFAMEKIHQYFSDQGIKTSNQAYAALLDAYIEAEDTEKIELYLGKIRRLGITEDVSINRMLMRLALDRLDWDLLEQCTKVAERKDPEGQDYLSTITMLYHVRQHELNLALRIFSGIQKPNVVHYSIAATVLGNLNQLDQLLLLEKRMESEGKAPTALSLVAFVSSYCKQGAEGLDEAKRYMSKNFQPDKRALLFNPRTANDMTYPPSLFSSLIKEYTSLGDIKEAKQVLSTYLEYFSKNITSKPDIPFAIASMRLYCSLHDTVLSRQFWDLILQVAQQNFITTDIAAVVDDKNIPSPSGVIPAYKSALNVAAETYFSFLASVNSFQELDQEWSRLEKLGFEYDDSLQNKRIIWLLYDDRLDAAIKRVYNIFLSSKRIEELIPDASSQNSIISFFLSPDSPLYFSTLKALRDKLDMAVEDDFVRISQGILVPTVKYLQTIRRDNEILFNLLAKV.

The N-terminal 16 residues, 1–16 (MSKSFAYRHIWCFWRF), are a transit peptide targeting the mitochondrion. PPR repeat units lie at residues 247–277 (NEVLYTQYLGFLTKRGDYQIAIYMFDEMYRT), 282–316 (SFTACRLMIESLVRQNKFEEAISLYKKIIAKRPKI), 429–461 (HLLNCFLNSSTVSLDVSMVLELLRDLKKKKIKV), 462–496 (DERTLVICITIFSRRKDLFAMEKIHQYFSDQGIKT), 497–531 (SNQAYAALLDAYIEAEDTEKIELYLGKIRRLGITE), 598–632 (NVVHYSIAATVLGNLNQLDQLLLLEKRMESEGKAP), and 683–713 (PPSLFSSLIKEYTSLGDIKEAKQVLSTYLEY).

As to quaternary structure, component of the MRH5C complex, composed of mrh5, ppr4, mtf2, and sls1. Proteins mtf2 and sls1 form a subcomplex that serves as a scaffold to bring mrh5 and ppr4 together. The MRH5C complex associates with the small subunit of the mitochondrial ribosome.

The protein resides in the mitochondrion. RNA-binding translation activation factor that as part of the MRH5C complex specifically recruits cox1 mRNA to the mitochondrial ribosome for translation initiation. This chain is Mitochondrial cox1 translation regulator ppr4, found in Schizosaccharomyces pombe (strain 972 / ATCC 24843) (Fission yeast).